A 332-amino-acid chain; its full sequence is Ketol-acid reductoisomerase (NADP(+)) (332 aa).

A KARI N-terminal Rossmann domain is found at 1–182; sequence MAVIYYDKDC…GSNRAGVLET (182 aa). Residues 25–28 and 83–86 each bind NADP(+); these read YGAQ and DTSQ. Residue His-108 is part of the active site. Gly-134 is a binding site for NADP(+). The KARI C-terminal knotted domain maps to 183–328; it reads TFAEETETDL…AELRSMMSWL (146 aa). Mg(2+) contacts are provided by Asp-191, Glu-195, Glu-227, and Glu-231. Residue Ser-252 participates in substrate binding.

This sequence belongs to the ketol-acid reductoisomerase family. Requires Mg(2+) as cofactor.

It carries out the reaction (2R)-2,3-dihydroxy-3-methylbutanoate + NADP(+) = (2S)-2-acetolactate + NADPH + H(+). The enzyme catalyses (2R,3R)-2,3-dihydroxy-3-methylpentanoate + NADP(+) = (S)-2-ethyl-2-hydroxy-3-oxobutanoate + NADPH + H(+). The protein operates within amino-acid biosynthesis; L-isoleucine biosynthesis; L-isoleucine from 2-oxobutanoate: step 2/4. It participates in amino-acid biosynthesis; L-valine biosynthesis; L-valine from pyruvate: step 2/4. Functionally, involved in the biosynthesis of branched-chain amino acids (BCAA). Catalyzes an alkyl-migration followed by a ketol-acid reduction of (S)-2-acetolactate (S2AL) to yield (R)-2,3-dihydroxy-isovalerate. In the isomerase reaction, S2AL is rearranged via a Mg-dependent methyl migration to produce 3-hydroxy-3-methyl-2-ketobutyrate (HMKB). In the reductase reaction, this 2-ketoacid undergoes a metal-dependent reduction by NADPH to yield (R)-2,3-dihydroxy-isovalerate. The polypeptide is Ketol-acid reductoisomerase (NADP(+)) (Dehalococcoides mccartyi (strain ATCC BAA-2266 / KCTC 15142 / 195) (Dehalococcoides ethenogenes (strain 195))).